We begin with the raw amino-acid sequence, 613 residues long: 8-methylmenaquinol:fumarate reductase flavoprotein subunit (613 aa).

The tat-type signal signal peptide spans Met-1–Ala-33. Residues Gly-53–Gly-58, Ser-78–Gly-93, and Asp-255 each bind FAD. His-276 and Thr-288 together coordinate substrate. Arg-319 functions as the Proton acceptor in the catalytic mechanism. His-387 contributes to the substrate binding site. Glu-413 is a binding site for FAD. Residue Arg-424 participates in substrate binding. Ser-429 to Leu-430 contributes to the FAD binding site.

Belongs to the FAD-dependent oxidoreductase 2 family. FRD/SDH subfamily. As to quaternary structure, the MFR complex is composed of three subunits: a flavoprotein (SdhA), an iron-sulfur protein (SdhB), and one hydrophobic anchor protein (SdhE). The cofactor is FAD. In terms of processing, predicted to be exported by the Tat system. The position of the signal peptide cleavage has not been experimentally proven.

It is found in the periplasm. Its subcellular location is the cell membrane. It carries out the reaction 8-methylmenaquinone-6 + succinate = 8-methylmenaquinol-6 + fumarate. Its function is as follows. Flavoprotein subunit of 8-methylmenaquinol:fumarate reductase (MFR), that catalyzes the reduction of fumarate using 8-methylmenaquinol-6 as electron donor. The complex shows no succinate oxidation activity. Is involved in anaerobic metabolism. SdhA contains the dicarboxylate reduction site. The chain is 8-methylmenaquinol:fumarate reductase flavoprotein subunit from Wolinella succinogenes (strain ATCC 29543 / DSM 1740 / CCUG 13145 / JCM 31913 / LMG 7466 / NCTC 11488 / FDC 602W) (Vibrio succinogenes).